A 374-amino-acid chain; its full sequence is Peptide chain release factor 2 (374 aa).

Residue Gln-256 is modified to N5-methylglutamine.

It belongs to the prokaryotic/mitochondrial release factor family. Post-translationally, methylated by PrmC. Methylation increases the termination efficiency of RF2.

The protein resides in the cytoplasm. In terms of biological role, peptide chain release factor 2 directs the termination of translation in response to the peptide chain termination codons UGA and UAA. This is Peptide chain release factor 2 from Mycobacterium leprae (strain Br4923).